Here is a 443-residue protein sequence, read N- to C-terminus: D(2) dopamine receptor (443 aa).

The Extracellular segment spans residues 1–37; the sequence is MDPLNLSWYDDDLERQNWSRPFNGSDGKADRPHYNYY. 3 N-linked (GlcNAc...) asparagine glycosylation sites follow: asparagine 5, asparagine 17, and asparagine 23. The chain crosses the membrane as a helical span at residues 38–60; the sequence is ATLLTLLIAVIVFGNVLVCMAVS. Topologically, residues 61-70 are cytoplasmic; it reads REKALQTTTN. The chain crosses the membrane as a helical span at residues 71-93; that stretch reads YLIVSLAVADLLVATLVMPWVVY. Residues 94 to 108 lie on the Extracellular side of the membrane; the sequence is LEVVGEWKFSKIHCD. Cysteines 107 and 182 form a disulfide. A helical transmembrane segment spans residues 109–130; sequence IFVTLDVMMCTASILNLCAISI. Residues 131-151 are Cytoplasmic-facing; sequence DRYTAVAMPMLYNTRYSSKRR. The helical transmembrane segment at 152–172 threads the bilayer; that stretch reads VTVMIAIVWVLSFTISCPLLF. Residues 173 to 188 lie on the Extracellular side of the membrane; that stretch reads GLNNADQNECIIANPA. A helical transmembrane segment spans residues 189-213; sequence FVVYSSIVSFYVPFIVTLLVYIKIY. Positions 211-373 are interaction with PPP1R9B; it reads KIYIVLRRRR…SQQKEKKATQ (163 aa). Residues 214-373 lie on the Cytoplasmic side of the membrane; the sequence is IVLRRRRKRV…SQQKEKKATQ (160 aa). The tract at residues 281–332 is disordered; it reads MEMLSSTSPPERTRYSPIPPSHHQLTLPDPSHHGLHSTPDSPAKPEKNGHAK. Residues 374 to 395 form a helical membrane-spanning segment; sequence MLAIVLGVFIICWLPFFITHIL. At 396–409 the chain is on the extracellular side; the sequence is NIHCDCNIPPVLYS. A disulfide bridge links cysteine 399 with cysteine 401. Residues 410–431 traverse the membrane as a helical segment; sequence AFTWLGYVNSAVNPIIYTTFNI. The Cytoplasmic segment spans residues 432–443; the sequence is EFRKAFLKILHC. Cysteine 443 is lipidated: S-palmitoyl cysteine.

The protein belongs to the G-protein coupled receptor 1 family. As to quaternary structure, forms homo- and heterooligomers with DRD4. The interaction with DRD4 may modulate agonist-induced downstream signaling. Interacts with CADPS and CADPS2. Interacts with GPRASP1, PPP1R9B and CLIC6. Interacts with ARRB2. Interacts with HTR2A. Interacts with DRD1. Interacts with KCNA2. Palmitoylated. Palmitoylation which is required for proper localization to the plasma membrane and stability of the receptor could be carried on by ZDHHC4, ZDHHC3 and ZDHHC8.

Its subcellular location is the cell membrane. It localises to the golgi apparatus membrane. Its function is as follows. Dopamine receptor whose activity is mediated by G proteins which inhibit adenylyl cyclase. Positively regulates postnatal regression of retinal hyaloid vessels via suppression of VEGFR2/KDR activity, downstream of OPN5. This chain is D(2) dopamine receptor (DRD2), found in Chlorocebus aethiops (Green monkey).